We begin with the raw amino-acid sequence, 479 residues long: Ribosomal RNA small subunit methyltransferase F (479 aa).

Residues 125 to 131, Glu-149, Asp-176, and Asp-194 each bind S-adenosyl-L-methionine; that span reads AAAPGSK. The Nucleophile role is filled by Cys-247.

This sequence belongs to the class I-like SAM-binding methyltransferase superfamily. RsmB/NOP family.

The protein resides in the cytoplasm. The catalysed reaction is cytidine(1407) in 16S rRNA + S-adenosyl-L-methionine = 5-methylcytidine(1407) in 16S rRNA + S-adenosyl-L-homocysteine + H(+). Specifically methylates the cytosine at position 1407 (m5C1407) of 16S rRNA. In Escherichia coli (strain UTI89 / UPEC), this protein is Ribosomal RNA small subunit methyltransferase F.